The chain runs to 243 residues: NAD(P)H-quinone oxidoreductase subunit K (243 aa).

C59, C60, C124, and C155 together coordinate [4Fe-4S] cluster.

This sequence belongs to the complex I 20 kDa subunit family. NDH-1 can be composed of about 15 different subunits; different subcomplexes with different compositions have been identified which probably have different functions. It depends on [4Fe-4S] cluster as a cofactor.

The protein resides in the cellular thylakoid membrane. The catalysed reaction is a plastoquinone + NADH + (n+1) H(+)(in) = a plastoquinol + NAD(+) + n H(+)(out). The enzyme catalyses a plastoquinone + NADPH + (n+1) H(+)(in) = a plastoquinol + NADP(+) + n H(+)(out). Functionally, NDH-1 shuttles electrons from an unknown electron donor, via FMN and iron-sulfur (Fe-S) centers, to quinones in the respiratory and/or the photosynthetic chain. The immediate electron acceptor for the enzyme in this species is believed to be plastoquinone. Couples the redox reaction to proton translocation, and thus conserves the redox energy in a proton gradient. Cyanobacterial NDH-1 also plays a role in inorganic carbon-concentration. The sequence is that of NAD(P)H-quinone oxidoreductase subunit K from Picosynechococcus sp. (strain ATCC 27264 / PCC 7002 / PR-6) (Agmenellum quadruplicatum).